A 58-amino-acid polypeptide reads, in one-letter code: UPF0337 protein CE1672 (58 aa).

Residues 1–39 (MGLGDKIRNTAEKASGKVKEATGKATDNEKLEAEGKTDQ) show a composition bias toward basic and acidic residues. A disordered region spans residues 1 to 58 (MGLGDKIRNTAEKASGKVKEATGKATDNEKLEAEGKTDQFKGNAKNTVENAKDTLRGN).

It belongs to the UPF0337 (CsbD) family.

In Corynebacterium efficiens (strain DSM 44549 / YS-314 / AJ 12310 / JCM 11189 / NBRC 100395), this protein is UPF0337 protein CE1672.